A 119-amino-acid chain; its full sequence is Non-structural protein 3b (119 aa).

One can recognise a DRBM domain in the interval 2-83 (DYVSLLNQFW…ARLICEQLQA (82 aa)).

Interacts with host RUNX1 isoform b.

Its subcellular location is the host nucleus. The protein localises to the host nucleolus. The protein resides in the host mitochondrion. Induces host cell G0/G1 arrest and apoptosis. The polypeptide is Non-structural protein 3b (Tylonycteris pachypus (Lesser bamboo bat)).